Consider the following 659-residue polypeptide: Pentatricopeptide repeat-containing protein At3g48810 (659 aa).

PPR repeat units follow at residues 75–109, 110–144, 145–179, 180–214, 215–243, 245–279, 280–314, 315–350, 351–385, 386–420, 421–455, 456–490, 492–526, 527–561, 562–598, and 599–633; these read TPLTFEVMIRKLAMDGQVDSVQYLLQQMKLQGFHC, SEDLFISVISVYRQVGLAERAVEMFYRIKEFGCDP, SVKIYNHVLDTLLGENRIQMIYMVYRDMKRDGFEP, NVFTYNVLLKALCKNNKVDGAKKLLVEMSNKGCCP, DAVSYTTVISSMCEVGLVKEGRELAERFE, VVSVYNALINGLCKEHDYKGAFELMREMVEKGISP, NVISYSTLINVLCNSGQIELAFSFLTQMLKRGCHP, NIYTLSSLVKGCFLRGTTFDALDLWNQMIRGFGLQP, NVVAYNTLVQGFCSHGNIVKAVSVFSHMEEIGCSP, NIRTYGSLINGFAKRGSLDGAVYIWNKMLTSGCCP, NVVVYTNMVEALCRHSKFKEAESLIEIMSKENCAP, SVPTFNAFIKGLCDAGRLDWAEKVFRQMEQQHRCP, NIVTYNELLDGLAKANRIEEAYGLTREIFMRGVEW, SSSTYNTLLHGSCNAGLPGIALQLVGKMMVDGKSP, DEITMNMIILAYCKQGKAERAAQMLDLVSCGRRKWRP, and DVISYTNVIWGLCRSNCREDGVILLERMISAGIVP.

It belongs to the PPR family. P subfamily.

This chain is Pentatricopeptide repeat-containing protein At3g48810, found in Arabidopsis thaliana (Mouse-ear cress).